The sequence spans 182 residues: Adenine phosphoribosyltransferase (182 aa).

This sequence belongs to the purine/pyrimidine phosphoribosyltransferase family. In terms of assembly, homodimer.

It is found in the cytoplasm. The catalysed reaction is AMP + diphosphate = 5-phospho-alpha-D-ribose 1-diphosphate + adenine. Its pathway is purine metabolism; AMP biosynthesis via salvage pathway; AMP from adenine: step 1/1. Its function is as follows. Catalyzes a salvage reaction resulting in the formation of AMP, that is energically less costly than de novo synthesis. This is Adenine phosphoribosyltransferase from Pseudomonas syringae pv. syringae (strain B728a).